The chain runs to 90 residues: MVTHELLVKAAGAVLTGLVGVSAYETLRKALGTAPIRRASVTVMEWGLRGTRRAEAAAESARLTVADVVAEARGRIGEEAPLPAGARVDE.

This is an uncharacterized protein from Mycobacterium tuberculosis (strain ATCC 25618 / H37Rv).